We begin with the raw amino-acid sequence, 408 residues long: Dual-specificity RNA methyltransferase RlmN (408 aa).

Glu120 acts as the Proton acceptor in catalysis. Residues Glu126 to Leu375 enclose the Radical SAM core domain. A disulfide bridge links Cys133 with Cys378. [4Fe-4S] cluster contacts are provided by Cys140, Cys144, and Cys147. S-adenosyl-L-methionine is bound by residues Gly204–Glu205, Ser236, Ser258–His260, and Asn335. Residue Cys378 is the S-methylcysteine intermediate of the active site.

This sequence belongs to the radical SAM superfamily. RlmN family. It depends on [4Fe-4S] cluster as a cofactor.

The protein resides in the cytoplasm. It carries out the reaction adenosine(2503) in 23S rRNA + 2 reduced [2Fe-2S]-[ferredoxin] + 2 S-adenosyl-L-methionine = 2-methyladenosine(2503) in 23S rRNA + 5'-deoxyadenosine + L-methionine + 2 oxidized [2Fe-2S]-[ferredoxin] + S-adenosyl-L-homocysteine. The enzyme catalyses adenosine(37) in tRNA + 2 reduced [2Fe-2S]-[ferredoxin] + 2 S-adenosyl-L-methionine = 2-methyladenosine(37) in tRNA + 5'-deoxyadenosine + L-methionine + 2 oxidized [2Fe-2S]-[ferredoxin] + S-adenosyl-L-homocysteine. Functionally, specifically methylates position 2 of adenine 2503 in 23S rRNA and position 2 of adenine 37 in tRNAs. m2A2503 modification seems to play a crucial role in the proofreading step occurring at the peptidyl transferase center and thus would serve to optimize ribosomal fidelity. This Rhizobium leguminosarum bv. trifolii (strain WSM2304) protein is Dual-specificity RNA methyltransferase RlmN.